The primary structure comprises 157 residues: NudC domain-containing protein 2 (157 aa).

Serine 2 carries the post-translational modification N-acetylserine. In terms of domain architecture, CS spans 14 to 104; sequence CATPWGQWYQ…DAANCWTSLL (91 aa). Residues 134–157 form a disordered region; the sequence is FDFSGAEISGNYTKGGPDFSNLEK. A Phosphoserine modification is found at serine 142. Tyrosine 145 bears the Phosphotyrosine mark.

Interacts with LIS1.

Its subcellular location is the chromosome. The protein localises to the centromere. It is found in the kinetochore. The protein resides in the cytoplasm. It localises to the cytoskeleton. Its subcellular location is the microtubule organizing center. The protein localises to the centrosome. It is found in the spindle pole. Its function is as follows. May regulate the LIS1/dynein pathway by stabilizing LIS1 with Hsp90 chaperone. This Rattus norvegicus (Rat) protein is NudC domain-containing protein 2 (Nudcd2).